The sequence spans 606 residues: Elongation factor 4 (606 aa).

Positions 11–193 (DKIRNFSIVA…AIVTRLPPPK (183 aa)) constitute a tr-type G domain. Residues 23 to 28 (DHGKST) and 140 to 143 (NKVD) each bind GTP.

The protein belongs to the TRAFAC class translation factor GTPase superfamily. Classic translation factor GTPase family. LepA subfamily.

Its subcellular location is the cell inner membrane. The enzyme catalyses GTP + H2O = GDP + phosphate + H(+). In terms of biological role, required for accurate and efficient protein synthesis under certain stress conditions. May act as a fidelity factor of the translation reaction, by catalyzing a one-codon backward translocation of tRNAs on improperly translocated ribosomes. Back-translocation proceeds from a post-translocation (POST) complex to a pre-translocation (PRE) complex, thus giving elongation factor G a second chance to translocate the tRNAs correctly. Binds to ribosomes in a GTP-dependent manner. The protein is Elongation factor 4 of Caulobacter vibrioides (strain ATCC 19089 / CIP 103742 / CB 15) (Caulobacter crescentus).